Here is a 256-residue protein sequence, read N- to C-terminus: Probable sulfite/organosulfonate exporter TauE (256 aa).

8 helical membrane passes run 5–25 (LLLP…FQTV), 33–53 (IVMG…AAVV), 76–96 (AVAA…LVLE), 103–123 (ATLL…SAAL), 142–162 (VFGG…IFQF), 172–190 (IRCA…RTLF), 199–219 (AAVC…TLLG), and 236–256 (FGVL…AWVL).

The protein belongs to the 4-toluene sulfonate uptake permease (TSUP) (TC 2.A.102) family.

The protein localises to the cell inner membrane. Could be a sulfite/organosulfonate exporter with a wide substrate range, including 3-sulfolactate and 3-sulfopyruvate. The polypeptide is Probable sulfite/organosulfonate exporter TauE (Cupriavidus necator (strain ATCC 17699 / DSM 428 / KCTC 22496 / NCIMB 10442 / H16 / Stanier 337) (Ralstonia eutropha)).